The primary structure comprises 1005 residues: Mitogen-activated protein kinase kinase kinase 10 (1005 aa).

In terms of domain architecture, SH3 spans 32–96; that stretch reads VSNPLWMAVF…PSNYVVSDDK (65 aa). The Protein kinase domain occupies 118-380; the sequence is LNLDEIIGVG…SCILEQLTTI (263 aa). ATP is bound by residues 124-132 and Lys-145; that span reads IGVGGFGKV. Asp-242 serves as the catalytic Proton acceptor. Leucine-zipper stretches follow at residues 404–425 and 439–460; these read IQQM…EEEL and LKRR…ELNI. 4 disordered regions span residues 551-611, 647-676, 712-736, and 758-940; these read SVLK…KHTP, QSDH…QSRR, FQWA…GEDS, and RSLI…AEGA. 2 stretches are compositionally biased toward basic and acidic residues: residues 576–588 and 648–658; these read QKER…RLKT and SDHRSHPEDTA. Basic and acidic residues-rich tracts occupy residues 761–786 and 799–809; these read IRSD…EDRG and YKVESFKRDPK. Residues 810 to 826 show a composition bias toward polar residues; that stretch reads QSLTPTHVTVGRNNTTE. Pro residues predominate over residues 862 to 879; that stretch reads EPSPFPRLPDPHFVFPPP. The span at 915–940 shows a compositional bias: low complexity; sequence SLSQTHSSSPSSGGGDACSSGSAEGA.

The protein belongs to the protein kinase superfamily. STE Ser/Thr protein kinase family. MAP kinase kinase kinase subfamily. In terms of assembly, homodimer. Binds to the GTPase rac1 but not cdc42 or rhoA. Interacts (via kinase domain) with pak1 (via kinase domain). Interacts with the ubiquitin-conjugating enzyme ube2d4. The cofactor is Mg(2+). Autophosphorylation on serine and threonine residues within the activation loop plays a role in enzyme activation. Post-translationally, mono- and poly-ubiquitinated. In adults, strongly expressed in the brain and spleen with lower levels in pancreas, heart, muscle and kidney (at protein level). In the developing embryo, expressed at stage 22 in the cement gland. Weakly expressed in the pronephros from stage 24 or 25, with expression increasing in strength by stage 30 and continuing at least until stage 37. Expression in the developing pronephros correlates with epithelialization of the proximal pronephric tubules.

It catalyses the reaction L-seryl-[protein] + ATP = O-phospho-L-seryl-[protein] + ADP + H(+). The enzyme catalyses L-threonyl-[protein] + ATP = O-phospho-L-threonyl-[protein] + ADP + H(+). With respect to regulation, homodimerization via the leucine zipper domains is required for autophosphorylation and subsequent activation. In terms of biological role, activates the JUN N-terminal pathway. Essential for pronephros and cement gland development. This is Mitogen-activated protein kinase kinase kinase 10 (map3k10) from Xenopus laevis (African clawed frog).